We begin with the raw amino-acid sequence, 468 residues long: Uronate isomerase (468 aa).

This sequence belongs to the metallo-dependent hydrolases superfamily. Uronate isomerase family.

It carries out the reaction D-glucuronate = D-fructuronate. The enzyme catalyses aldehydo-D-galacturonate = keto-D-tagaturonate. It participates in carbohydrate metabolism; pentose and glucuronate interconversion. This is Uronate isomerase from Bacteroides thetaiotaomicron (strain ATCC 29148 / DSM 2079 / JCM 5827 / CCUG 10774 / NCTC 10582 / VPI-5482 / E50).